The sequence spans 332 residues: uncharacterized protein (332 aa).

Residues 185–205 (MVYGYSVFNAFFILLALPNVI) traverse the membrane as a helical segment.

It is found in the host membrane. This is an uncharacterized protein from Sulfolobus islandicus filamentous virus (isolate Iceland/Hveragerdi) (SIFV).